The primary structure comprises 300 residues: 33 kDa chaperonin (300 aa).

Disulfide bonds link C247–C249 and C280–C283.

Belongs to the HSP33 family. In terms of processing, under oxidizing conditions two disulfide bonds are formed involving the reactive cysteines. Under reducing conditions zinc is bound to the reactive cysteines and the protein is inactive.

The protein resides in the cytoplasm. Its function is as follows. Redox regulated molecular chaperone. Protects both thermally unfolding and oxidatively damaged proteins from irreversible aggregation. Plays an important role in the bacterial defense system toward oxidative stress. The protein is 33 kDa chaperonin of Prochlorococcus marinus (strain MIT 9515).